Consider the following 131-residue polypeptide: Small ribosomal subunit protein uS8 (131 aa).

Belongs to the universal ribosomal protein uS8 family. As to quaternary structure, part of the 30S ribosomal subunit. Contacts proteins S5 and S12.

One of the primary rRNA binding proteins, it binds directly to 16S rRNA central domain where it helps coordinate assembly of the platform of the 30S subunit. This Desulforudis audaxviator (strain MP104C) protein is Small ribosomal subunit protein uS8.